A 262-amino-acid polypeptide reads, in one-letter code: Protein N-terminal and lysine N-methyltransferase EFM7 (262 aa).

S-adenosyl-L-methionine contacts are provided by residues Trp59, 86–88 (GAA), Asp108, Trp143, and Ser171.

Belongs to the class I-like SAM-binding methyltransferase superfamily. EFM7 family.

The protein localises to the cytoplasm. In terms of biological role, S-adenosyl-L-methionine-dependent protein methyltransferase that trimethylates the N-terminal glycine 'Gly-2' of elongation factor 1-alpha, before also catalyzing the mono- and dimethylation of 'Lys-3'. This chain is Protein N-terminal and lysine N-methyltransferase EFM7, found in Candida albicans (strain SC5314 / ATCC MYA-2876) (Yeast).